The chain runs to 277 residues: NADPH-dependent 7-cyano-7-deazaguanine reductase (277 aa).

86-88 (IES) serves as a coordination point for substrate. Position 88–89 (88–89 (SK)) interacts with NADPH. Cys185 (thioimide intermediate) is an active-site residue. The Proton donor role is filled by Asp192. 224-225 (HE) is a binding site for substrate. 253–254 (RG) provides a ligand contact to NADPH.

The protein belongs to the GTP cyclohydrolase I family. QueF type 2 subfamily. As to quaternary structure, homodimer.

Its subcellular location is the cytoplasm. The enzyme catalyses 7-aminomethyl-7-carbaguanine + 2 NADP(+) = 7-cyano-7-deazaguanine + 2 NADPH + 3 H(+). The protein operates within tRNA modification; tRNA-queuosine biosynthesis. Catalyzes the NADPH-dependent reduction of 7-cyano-7-deazaguanine (preQ0) to 7-aminomethyl-7-deazaguanine (preQ1). The sequence is that of NADPH-dependent 7-cyano-7-deazaguanine reductase from Hydrogenovibrio crunogenus (strain DSM 25203 / XCL-2) (Thiomicrospira crunogena).